We begin with the raw amino-acid sequence, 534 residues long: Serine/threonine-protein phosphatase 2B catalytic subunit (534 aa).

Residues aspartate 88, histidine 90, and aspartate 116 each contribute to the Fe cation site. Residues aspartate 116 and asparagine 148 each coordinate Zn(2+). Catalysis depends on histidine 149, which acts as the Proton donor. Positions 197 and 279 each coordinate Zn(2+). 2 disordered regions span residues leucine 375–serine 398 and proline 475–alanine 534. Composition is skewed to basic and acidic residues over residues proline 475–glutamine 497 and glutamine 524–alanine 534.

It belongs to the PPP phosphatase family. PP-2B subfamily. In terms of assembly, composed of two components (A and B), the A component is the catalytic subunit and the B component confers calcium sensitivity. The cofactor is Fe(3+). Zn(2+) serves as cofactor.

It catalyses the reaction O-phospho-L-seryl-[protein] + H2O = L-seryl-[protein] + phosphate. The catalysed reaction is O-phospho-L-threonyl-[protein] + H2O = L-threonyl-[protein] + phosphate. Calcium-dependent, calmodulin-stimulated protein phosphatase. This subunit may have a role in the calmodulin activation of calcineurin. This Aspergillus fumigatus (strain ATCC MYA-4609 / CBS 101355 / FGSC A1100 / Af293) (Neosartorya fumigata) protein is Serine/threonine-protein phosphatase 2B catalytic subunit (cnaA).